A 717-amino-acid chain; its full sequence is Polyribonucleotide nucleotidyltransferase (717 aa).

Positions 486 and 492 each coordinate Mg(2+). The KH domain maps to 553-612 (PKIVQLQIDIDKISLVIGSTGKTVKAITDEFEVRVQIEQDGRITLFGTDNLKMQKAKAKI). The 94-residue stretch at 622-715 (GEIYDGIVKK…KFGKIELELA (94 aa)) folds into the S1 motif domain. Residues 650 to 681 (SNRSRSRDDRYGSDIRHSRYSNRNSRYGRDNR) are disordered. Basic and acidic residues predominate over residues 654–666 (RSRDDRYGSDIRH).

The protein belongs to the polyribonucleotide nucleotidyltransferase family. It depends on Mg(2+) as a cofactor.

Its subcellular location is the cytoplasm. The catalysed reaction is RNA(n+1) + phosphate = RNA(n) + a ribonucleoside 5'-diphosphate. Its function is as follows. Involved in mRNA degradation. Catalyzes the phosphorolysis of single-stranded polyribonucleotides processively in the 3'- to 5'-direction. The polypeptide is Polyribonucleotide nucleotidyltransferase (Borrelia duttonii (strain Ly)).